Here is a 587-residue protein sequence, read N- to C-terminus: General negative regulator of transcription subunit 4 (587 aa).

The segment at 33–78 adopts an RING-type zinc-finger fold; that stretch reads CPLCIEPMDITDKNFFPCPCGYQICQFCYNNIRQNPELNGRCPACR. Residues 94–128 adopt a coiled-coil conformation; it reads EELKMERAKLARKEKERKHREKERKENEYTNRKHL. The region spanning 137 to 228 is the RRM domain; the sequence is NLVYVVGINP…YMDGRLIKAA (92 aa). Residues 229–256 form a C3H1-type zinc finger; it reads YGTTKYCSSYLRGLPCPNPNCMFLHEPG. Lys270 participates in a covalent cross-link: Glycyl lysine isopeptide (Lys-Gly) (interchain with G-Cter in ubiquitin). Position 310 is a phosphothreonine (Thr310). Ser312 carries the post-translational modification Phosphoserine. Thr326 carries the post-translational modification Phosphothreonine. Ser360 is modified (phosphoserine). The interval 370-412 is disordered; sequence TLNDSLGHHTTPTTENTITSTTTTTNTNATSHSHGSKKKQSLA. The span at 377 to 402 shows a compositional bias: low complexity; it reads HHTTPTTENTITSTTTTTNTNATSHS.

In terms of assembly, forms a NOT protein complex that comprises NOT1, NOT2, NOT3, NOT4 and NOT5. Subunit of the 1.0 MDa CCR4-NOT core complex that contains CCR4, CAF1, NOT1, NOT2, NOT3, NOT4, NOT5, CAF40 and CAF130. In the complex interacts with NOT1. The core complex probably is part of a less characterized 1.9 MDa CCR4-NOT complex.

It localises to the cytoplasm. The protein resides in the nucleus. The enzyme catalyses S-ubiquitinyl-[E2 ubiquitin-conjugating enzyme]-L-cysteine + [acceptor protein]-L-lysine = [E2 ubiquitin-conjugating enzyme]-L-cysteine + N(6)-ubiquitinyl-[acceptor protein]-L-lysine.. Its pathway is protein modification; protein ubiquitination. Its function is as follows. E3 ubiquitin-protein ligase component of the CCR4-NOT core complex, which in the nucleus seems to be a general transcription factor, and in the cytoplasm the major mRNA deadenylase involved in mRNA turnover. The NOT protein subcomplex negatively regulates the basal and activated transcription of many genes. Preferentially affects TC-type TATA element-dependent transcription. Could directly or indirectly inhibit component(s) of the general transcription machinery. In the cytoplasm, catalyzes monoubiquitination of RPS7/es7 in response to stalled ribosomes, initiating a HEL2-dependent response that activates the No-Go Decay (NGD) pathway. The protein is General negative regulator of transcription subunit 4 (MOT2) of Saccharomyces cerevisiae (strain ATCC 204508 / S288c) (Baker's yeast).